The primary structure comprises 240 residues: MKERDSRNQIGDLPFRVKEGFSVYEFIEQLYEANVVERINRFLVKVTFNGKEFLAHLHDPGRLKDLIYPGNLVLIRETKGYKTKFSITAAYSNSRFVVLDSRLHNIIASKFLPEAYEKEIKVGNSRIDFKYDNTYLEVKGCTLVENEIAYFPDAPTERGRTHLKELRELMKKGFNAILLILVMRDDAKCFLPNEKTDPKFSIEFWNSIKEGLNVNIKTFKLVGNKIIYVRDIPLCKTNLT.

Belongs to the SfsA family.

This Saccharolobus islandicus (strain M.14.25 / Kamchatka #1) (Sulfolobus islandicus) protein is Sugar fermentation stimulation protein homolog.